The sequence spans 627 residues: UvrABC system protein C (627 aa).

Residues 26–105 (PSPGVYQFRN…IKELKPRYNV (80 aa)) enclose the GIY-YIG domain. The UVR domain maps to 219-254 (STMIRSLTSAMQLFARELKFERAAEIKMQLESLKRY).

It belongs to the UvrC family. Interacts with UvrB in an incision complex.

Its subcellular location is the cytoplasm. In terms of biological role, the UvrABC repair system catalyzes the recognition and processing of DNA lesions. UvrC both incises the 5' and 3' sides of the lesion. The N-terminal half is responsible for the 3' incision and the C-terminal half is responsible for the 5' incision. The protein is UvrABC system protein C of Pelodictyon phaeoclathratiforme (strain DSM 5477 / BU-1).